Here is a 341-residue protein sequence, read N- to C-terminus: Glyceraldehyde-3-phosphate dehydrogenase, cytosolic (341 aa).

Residues 15-16, aspartate 37, and arginine 84 contribute to the NAD(+) site; that span reads RI. D-glyceraldehyde 3-phosphate contacts are provided by residues 155–157, threonine 186, 215–216, and arginine 238; these read SCT and TG. Catalysis depends on cysteine 156, which acts as the Nucleophile. Residue asparagine 320 coordinates NAD(+).

Belongs to the glyceraldehyde-3-phosphate dehydrogenase family. Homotetramer.

The protein localises to the cytoplasm. The enzyme catalyses D-glyceraldehyde 3-phosphate + phosphate + NAD(+) = (2R)-3-phospho-glyceroyl phosphate + NADH + H(+). The protein operates within carbohydrate degradation; glycolysis; pyruvate from D-glyceraldehyde 3-phosphate: step 1/5. In terms of biological role, key enzyme in glycolysis that catalyzes the first step of the pathway by converting D-glyceraldehyde 3-phosphate (G3P) into 3-phospho-D-glyceroyl phosphate. Essential for the maintenance of cellular ATP levels and carbohydrate metabolism. The polypeptide is Glyceraldehyde-3-phosphate dehydrogenase, cytosolic (GAPC) (Magnolia liliiflora (Mulan magnolia)).